We begin with the raw amino-acid sequence, 154 residues long: uncharacterized protein (154 aa).

A GTP-binding site is contributed by 12 to 19; it reads GSSDVGKT. Residues 17 to 112 form the G domain; it reads GKTTLMENLI…KIPYGIFINK (96 aa).

To M.thermoautotrophicum MTH765.

This is an uncharacterized protein from Methanocaldococcus jannaschii (strain ATCC 43067 / DSM 2661 / JAL-1 / JCM 10045 / NBRC 100440) (Methanococcus jannaschii).